The primary structure comprises 346 residues: Immunoglobulin heavy constant alpha (346 aa).

3 Ig-like domains span residues 6–96 (PSIF…KSVD), 118–212 (PRLS…VSIT), and 221–323 (PQVH…KSID). Residues C26 and C83 are joined by a disulfide bond. N134 is a glycosylation site (N-linked (GlcNAc...) (complex) asparagine). Disulfide bonds link C139/C196 and C243/C306. N-linked (GlcNAc...) (complex) asparagine glycosylation is present at N333.

In terms of assembly, immunoglobulins are composed of two identical heavy chains and two identical light chains; disulfide-linked. Monomeric or polymeric. Part of the secretory IgA (sIgA) complex that consists of two, four or five IgA monomers, and two additional non-Ig polypeptides, namely the JCHAIN and the secretory component (the proteolytic product of PIGR). In terms of processing, N-glycosylated. N-glycans attached to Asn-134 varies from differentially fucosylated complex and hybrid to sialylated with N-glycoyl neuraminic acid types: GlcNAc2Man3GlcNAc2(Fuc); GlcNAc1Man4GlcNAc2(Fuc); GlcNAc1Man4GlcNAc2; Gal1GlcNAc2Man3GlcNAc2(Fuc); GlcNAc2Man3GlcNAc2; Gal1GlcNAc2Man3GlcNAc2; GlcNAc1Man3GlcNAc2; GlcNAc1Man2GlcNAc2 and NeuGc1Gal1GlcNAc2Man3GlcNAc2(Fuc). N-glycans attached to Asn-333 are mainly fucosylated complex types: GlcNAc2Man3GlcNAc2; GlcNAc1Man3GlcNAc2; GlcNAc1Man3GlcNAc2(Fuc); GlcNAc2Man3GlcNAc2(Fuc); Gal1GlcNAc2Man3GlcNAc2(Fuc); NeuGc1Gal1GlcNAc1Man3GlcNAc2(Fuc); NeuGc1Gal1GlcNAc2Man3GlcNAc2(Fuc) and NeuAc1Gal1GlcNAc2Man3GlcNAc2(Fuc).

It is found in the secreted. It localises to the cell membrane. Constant region of immunoglobulin heavy chains. Immunoglobulins, also known as antibodies, are membrane-bound or secreted glycoproteins produced by B lymphocytes. In the recognition phase of humoral immunity, the membrane-bound immunoglobulins serve as receptors which, upon binding of a specific antigen, trigger the clonal expansion and differentiation of B lymphocytes into immunoglobulins-secreting plasma cells. Secreted immunoglobulins mediate the effector phase of humoral immunity, which results in the elimination of bound antigens. The antigen binding site is formed by the variable domain of one heavy chain, together with that of its associated light chain. Thus, each immunoglobulin has two antigen binding sites with remarkable affinity for a particular antigen. The variable domains are assembled by a process called V-(D)-J rearrangement and can then be subjected to somatic hypermutations which, after exposure to antigen and selection, allow affinity maturation for a particular antigen. Ig alpha is the major immunoglobulin class in body secretions. The sequence is that of Immunoglobulin heavy constant alpha (IGHA) from Equus asinus (Donkey).